The primary structure comprises 580 residues: Viral transcription factor IE2 (580 aa).

Residues 1–11 are compositionally biased toward basic and acidic residues; that stretch reads MESSAKRKMDP. Disordered regions lie at residues 1–30 and 99–161; these read MESS…TPVT and DSSS…VIIK. Residues 99–133 show a composition bias toward polar residues; sequence DSSSTGPTLTTHSCSVSSAPLNKPTPTSVAVTNTP. Residues Lys-175 and Lys-180 each participate in a glycyl lysine isopeptide (Lys-Gly) (interchain with G-Cter in SUMO) cross-link. The SUMO-interacting motif 1/SIM1 signature appears at 199–202; sequence CIVI. A non-covalent SUMO1 binding region (SIM) region spans residues 200–208; sequence IVISDSEEE. Phosphoserine occurs at positions 203 and 205. Positions 206 to 336 are disordered; that stretch reads EEEQGEEVET…SKRISELDNE (131 aa). Composition is skewed to low complexity over residues 216–236, 259–271, and 302–317; these read RGAT…TSPT, SSSS…SASD, and AASS…SSGG. An SUMO-interacting motif 1/SIM2 motif is present at residues 410–413; that stretch reads IQII. The SUMO-interacting motif 1/SIM3 signature appears at 501–504; the sequence is VDLL.

The protein belongs to the HHV-5 IE2 protein family. As to quaternary structure, interacts with host SUMO-modified form of TATA-binding protein (TBP)-associated factor 12/TAF12 in a SIM-dependent manner; this interaction increases the transactivation activity of IE2. Interacts with host CHAF1A. Interacts with several components of the host transcriptional machinery including TBP, TF2B and CREB1. Interacts with host DNA replication licensing factor MCM3. Interacts with host PLSCR1; this interaction inhibits IE2 transactivating activity. Post-translationally, phosphorylated by host CK2 at Ser-203 and Ser-205; leading to enhanced SUMOylation. In terms of processing, SUMOylated; SUMOylation is enhanced when IE2 is phosphorylated by host CK2. The sumoylation is necessary for efficient replication of the virus and thus for the function of this viral transcription factor.

The protein localises to the host nucleus. In terms of biological role, stimulates viral early and late gene expression and thus play a crucial role in the regulation of productive infection. Selectively drives host RNA Pol II transcription initiation at a subset of viral early-late and late promoters without substantially affecting Pol II transcription of expressed host genes. Mechanistically, forms a repressive complex at the major immediate-early promoter region involving direct association with host nucleosomes and TBP. Concerning activation, stimulates transcription by binding nearby, but not within, core promoter regions. In addition, activates quiescent cells to reenter the cell cycle and up-regulates several E2F-responsive genes, which are responsible for pushing the cell into S phase. In S-phase, inhibits cellular DNA synthesis and blocks further cell cycle progression. This Homo sapiens (Human) protein is Viral transcription factor IE2 (UL122).